We begin with the raw amino-acid sequence, 130 residues long: Small ribosomal subunit protein uS8 (130 aa).

It belongs to the universal ribosomal protein uS8 family. In terms of assembly, part of the 30S ribosomal subunit.

One of the primary rRNA binding proteins, it binds directly to 16S rRNA central domain where it helps coordinate assembly of the platform of the 30S subunit. This Methanococcoides burtonii (strain DSM 6242 / NBRC 107633 / OCM 468 / ACE-M) protein is Small ribosomal subunit protein uS8.